The primary structure comprises 130 residues: MSSKATKTVKSKFDIINNQLRDDLIDFRSGDTIRVDVKIKEGYKFRIQSFEGLVIKTQGSGITYSVVVRKMSNGVFVERTFPLHSPIIDSVTLIKRGKVRRSRIYYIRKLSGKAARIKEIMPTKQAKEIK.

Belongs to the bacterial ribosomal protein bL19 family.

Its function is as follows. This protein is located at the 30S-50S ribosomal subunit interface and may play a role in the structure and function of the aminoacyl-tRNA binding site. This Mycoplasma mycoides subsp. mycoides SC (strain CCUG 32753 / NCTC 10114 / PG1) protein is Large ribosomal subunit protein bL19.